Here is a 122-residue protein sequence, read N- to C-terminus: UPF0102 protein Dred_2035 (122 aa).

The protein belongs to the UPF0102 family.

The protein is UPF0102 protein Dred_2035 of Desulforamulus reducens (strain ATCC BAA-1160 / DSM 100696 / MI-1) (Desulfotomaculum reducens).